The sequence spans 625 residues: Probable potassium transport system protein Kup 2 (625 aa).

A run of 12 helical transmembrane segments spans residues 10 to 30 (LAAL…TSPL), 47 to 67 (GVHL…VVTL), 104 to 124 (VLLL…VITP), 140 to 160 (PAFK…LFAV), 172 to 192 (FGPV…AEII), 214 to 234 (GWHM…VEAL), 250 to 270 (WLGL…ALLM), 283 to 303 (LFPQ…TVIA), 347 to 367 (WLLL…SALA), 369 to 389 (AYGI…FFVV), 396 to 416 (PLPV…LLVV), and 422 to 442 (FFQG…VMAT).

The protein belongs to the HAK/KUP transporter (TC 2.A.72) family.

Its subcellular location is the cell inner membrane. The enzyme catalyses K(+)(in) + H(+)(in) = K(+)(out) + H(+)(out). Functionally, transport of potassium into the cell. Likely operates as a K(+):H(+) symporter. The protein is Probable potassium transport system protein Kup 2 of Albidiferax ferrireducens (strain ATCC BAA-621 / DSM 15236 / T118) (Rhodoferax ferrireducens).